A 155-amino-acid chain; its full sequence is Small ribosomal subunit protein uS7cz/uS7cy (155 aa).

Belongs to the universal ribosomal protein uS7 family. As to quaternary structure, part of the 30S ribosomal subunit.

The protein resides in the plastid. It is found in the chloroplast. Functionally, one of the primary rRNA binding proteins, it binds directly to 16S rRNA where it nucleates assembly of the head domain of the 30S subunit. The sequence is that of Small ribosomal subunit protein uS7cz/uS7cy (rps7-A) from Nymphaea alba (White water-lily).